The primary structure comprises 403 residues: Coenzyme A biosynthesis bifunctional protein CoaBC (403 aa).

The phosphopantothenoylcysteine decarboxylase stretch occupies residues 1–197; that stretch reads MLHHVKLIYA…LHPKSLEGKR (197 aa). Residues 198 to 403 form a phosphopantothenate--cysteine ligase region; it reads VLVTAGATRE…RLWDEIEKML (206 aa). Residues aspartate 287, lysine 297, and phenylalanine 330 each contribute to the CTP site.

The protein in the N-terminal section; belongs to the HFCD (homo-oligomeric flavin containing Cys decarboxylase) superfamily. This sequence in the C-terminal section; belongs to the PPC synthetase family. Requires Mg(2+) as cofactor. The cofactor is FMN.

It carries out the reaction N-[(R)-4-phosphopantothenoyl]-L-cysteine + H(+) = (R)-4'-phosphopantetheine + CO2. The catalysed reaction is (R)-4'-phosphopantothenate + L-cysteine + CTP = N-[(R)-4-phosphopantothenoyl]-L-cysteine + CMP + diphosphate + H(+). It participates in cofactor biosynthesis; coenzyme A biosynthesis. Its function is as follows. Catalyzes two sequential steps in the biosynthesis of coenzyme A. In the first step cysteine is conjugated to 4'-phosphopantothenate to form 4-phosphopantothenoylcysteine. In the second step the latter compound is decarboxylated to form 4'-phosphopantotheine. This Thermococcus kodakarensis (strain ATCC BAA-918 / JCM 12380 / KOD1) (Pyrococcus kodakaraensis (strain KOD1)) protein is Coenzyme A biosynthesis bifunctional protein CoaBC.